We begin with the raw amino-acid sequence, 505 residues long: Deoxyguanosinetriphosphate triphosphohydrolase (505 aa).

Positions 66-273 constitute an HD domain; the sequence is RLTHSMEVQQ…MEAADDISYC (208 aa).

Belongs to the dGTPase family. Type 1 subfamily. As to quaternary structure, homotetramer. Mg(2+) serves as cofactor.

It carries out the reaction dGTP + H2O = 2'-deoxyguanosine + triphosphate + H(+). DGTPase preferentially hydrolyzes dGTP over the other canonical NTPs. This is Deoxyguanosinetriphosphate triphosphohydrolase from Escherichia coli O7:K1 (strain IAI39 / ExPEC).